Here is a 448-residue protein sequence, read N- to C-terminus: Dual specificity mitogen-activated protein kinase kinase 5 (448 aa).

Residues 18–25 (VIRIKIPN) form an interaction with MAPK7 region. The region spanning 18–109 (VIRIKIPNSG…EPLQIFPRAC (92 aa)) is the PB1 domain. The interval 64-68 (DEDGD) is interaction with MAP3K2/MAP3K3. The disordered stretch occupies residues 116–144 (NIHGLKVNTRAGPSQHSSPAVSDSLPSNS). The tract at residues 117–131 (IHGLKVNTRAGPSQH) is interaction with MAPK7. The span at 126–144 (AGPSQHSSPAVSDSLPSNS) shows a compositional bias: polar residues. One can recognise a Protein kinase domain in the interval 166–409 (IRYRDTLGHG…MRKQPKERPA (244 aa)). ATP is bound by residues 172–180 (LGHGNGGTV) and Lys-195. Asp-283 functions as the Proton acceptor in the catalytic mechanism. Position 311 is a phosphoserine (Ser-311). Thr-315 carries the phosphothreonine modification.

It belongs to the protein kinase superfamily. STE Ser/Thr protein kinase family. MAP kinase kinase subfamily. Interacts with PARD6A, MAP3K3 and MAPK7. Forms a complex with SQSTM1 and PRKCZ or PRKCI. In terms of assembly, (Microbial infection) Interacts with Yersinia YopJ. Mg(2+) is required as a cofactor. In terms of processing, activated by phosphorylation on Ser/Thr by MAP kinase kinase kinases. (Microbial infection) Yersinia YopJ may acetylate Ser/Thr residues, preventing phosphorylation and activation, thus blocking the MAPK signaling pathway. In terms of tissue distribution, expressed in many adult tissues. Abundant in heart and skeletal muscle.

It carries out the reaction L-seryl-[protein] + ATP = O-phospho-L-seryl-[protein] + ADP + H(+). The enzyme catalyses L-threonyl-[protein] + ATP = O-phospho-L-threonyl-[protein] + ADP + H(+). It catalyses the reaction L-tyrosyl-[protein] + ATP = O-phospho-L-tyrosyl-[protein] + ADP + H(+). Functionally, acts as a scaffold for the formation of a ternary MAP3K2/MAP3K3-MAP3K5-MAPK7 signaling complex. Activation of this pathway appears to play a critical role in protecting cells from stress-induced apoptosis, neuronal survival and cardiac development and angiogenesis. As part of the MAPK/ERK signaling pathway, acts as a negative regulator of apoptosis in cardiomyocytes via promotion of STUB1/CHIP-mediated ubiquitination and degradation of ICER-type isoforms of CREM. This chain is Dual specificity mitogen-activated protein kinase kinase 5 (MAP2K5), found in Homo sapiens (Human).